Reading from the N-terminus, the 782-residue chain is Gelsolin (782 aa).

The first 27 residues, 1–27, serve as a signal peptide directing secretion; sequence MAPHRPAPALLCALSLALCALSLPVRA. The interval 53 to 176 is actin-severing; it reads VVEHPEFLKA…YKKGGVASGF (124 aa). Residues 76 to 158 form a Gelsolin-like 1 repeat; the sequence is FDLVPVPTNL…VQGFESATFL (83 aa). Phosphotyrosine; by SRC; in vitro is present on tyrosine 86. Glycine 92, aspartate 93, glutamate 124, aspartate 136, glycine 141, and alanine 143 together coordinate Ca(2+). Residues 123–126 form an actin-actin interfilament contact point region; it reads DESG. Residue 162–169 coordinates a 1,2-diacyl-sn-glycero-3-phospho-(1D-myo-inositol-4,5-bisphosphate); sequence KSGLKYKK. Valine 172 is a binding site for Ca(2+). Residue 188–196 coordinates a 1,2-diacyl-sn-glycero-3-phospho-(1D-myo-inositol-4,5-bisphosphate); sequence RLFQVKGRR. The stretch at 198–270 is one Gelsolin-like 2 repeat; the sequence is VRATEVPVSW…SEEGTEPEAM (73 aa). Residues glycine 213 and aspartate 214 each contribute to the Ca(2+) site. A disulfide bridge connects residues cysteine 215 and cysteine 228. Glutamate 236 contacts Ca(2+). Residues 247-262 are compositionally biased toward basic and acidic residues; that stretch reads IRDNERSGRARVHVSE. Positions 247-285 are disordered; that stretch reads IRDNERSGRARVHVSEEGTEPEAMLQVLGPKPALPAGTE. Residues aspartate 286, glutamate 329, aspartate 330, and glutamate 354 each contribute to the Ca(2+) site. A Gelsolin-like 3 repeat occupies 317–389; sequence DENPFAQGAL…LPEGGETPLF (73 aa). Tyrosine 409 is subject to Phosphotyrosine; by SRC; in vitro. The interval 434-782 is actin-binding, Ca-sensitive; that stretch reads AAQHGMDDDG…LDRAMAELAA (349 aa). Residues 455–536 form a Gelsolin-like 4 repeat; sequence SNKVPVDPAT…VQGKEPAHLM (82 aa). Tyrosine 465 is modified (phosphotyrosine; by SRC). 7 residues coordinate Ca(2+): glycine 471, aspartate 472, glutamate 502, aspartate 514, glycine 519, proline 521, and threonine 551. One copy of the Gelsolin-like 5 repeat lies at 576–642; sequence TRAVEVLPKA…AEGSEPDGFW (67 aa). Lysine 584 carries the post-translational modification N6-acetyllysine. Residues asparagine 591 and aspartate 592 each contribute to the Ca(2+) site. Tyrosine 603 bears the Phosphotyrosine; by SRC; in vitro mark. A Ca(2+)-binding site is contributed by glutamate 614. A Phosphotyrosine; by SRC; in vitro modification is found at tyrosine 651. Residues 681–756 form a Gelsolin-like 6 repeat; it reads IEEVPGELMQ…VKQGFEPPSF (76 aa). The Ca(2+) site is built by aspartate 696, aspartate 697, and glutamate 719. Threonine 742 is modified (phosphothreonine).

It belongs to the villin/gelsolin family. In terms of assembly, binds to actin and to fibronectin. Identified in a complex composed of ACTA1, COBL, GSN and TMSB4X. Interacts with the inactive form of EIF2AK2/PKR. Interacts with FLII. Phosphorylation on Tyr-86, Tyr-409, Tyr-465, Tyr-603 and Tyr-651 in vitro is induced in presence of phospholipids. Phagocytic cells, platelets, fibroblasts, nonmuscle cells, smooth and skeletal muscle cells.

The protein resides in the cytoplasm. Its subcellular location is the cytoskeleton. It localises to the secreted. In terms of biological role, calcium-regulated, actin-modulating protein that binds to the plus (or barbed) ends of actin monomers or filaments, preventing monomer exchange (end-blocking or capping). It can promote the assembly of monomers into filaments (nucleation) as well as sever filaments already formed. Plays a role in ciliogenesis. The protein is Gelsolin (GSN) of Homo sapiens (Human).